Reading from the N-terminus, the 389-residue chain is Mannitol-1-phosphate 5-dehydrogenase (389 aa).

7–18 (AVHFGGGNIGRG) is a binding site for NAD(+). The active site involves K216.

Belongs to the mannitol dehydrogenase family. In terms of assembly, monomer.

It catalyses the reaction D-mannitol 1-phosphate + NAD(+) = beta-D-fructose 6-phosphate + NADH + H(+). In terms of biological role, catalyzes the NAD(H)-dependent interconversion of D-fructose 6-phosphate and D-mannitol 1-phosphate in the mannitol metabolic pathway. This is Mannitol-1-phosphate 5-dehydrogenase from Pyrenophora tritici-repentis (strain Pt-1C-BFP) (Wheat tan spot fungus).